A 492-amino-acid polypeptide reads, in one-letter code: Glutamate--cysteine ligase A, chloroplastic (492 aa).

Cysteine 156 and cysteine 376 are joined by a disulfide.

Belongs to the carboxylate-amine ligase family. Glutamate--cysteine ligase type 2 subfamily. Homodimer or monomer when oxidized or reduced, respectively. The Cys-156-Cys-376 disulfide bridge is known to modulate the enzyme activity according to the redox status. The oxidized form constitutes the active enzyme.

Its subcellular location is the plastid. The protein localises to the chloroplast. It carries out the reaction L-cysteine + L-glutamate + ATP = gamma-L-glutamyl-L-cysteine + ADP + phosphate + H(+). Its pathway is sulfur metabolism; glutathione biosynthesis; glutathione from L-cysteine and L-glutamate: step 1/2. The sequence is that of Glutamate--cysteine ligase A, chloroplastic (GSH1-1) from Oryza sativa subsp. indica (Rice).